We begin with the raw amino-acid sequence, 144 residues long: MCHAREASLGTGEPEAAPRDNFPREAGSKRGIGAAFETRAQRFLERAGLALVARNVTVRGGEIDLVMRERDGTLVFVEVRARANSRYGGAAASIGVRKRMRLLLAAHAFWARTGGANACRFDVVAFEGGRLVWLRDAFRADDAG.

The tract at residues 1 to 28 is disordered; the sequence is MCHAREASLGTGEPEAAPRDNFPREAGS. Over residues 16 to 28 the composition is skewed to basic and acidic residues; it reads AAPRDNFPREAGS.

The protein belongs to the UPF0102 family.

The sequence is that of UPF0102 protein BURPS668_3819 from Burkholderia pseudomallei (strain 668).